The following is a 347-amino-acid chain: NADH-ubiquinone oxidoreductase chain 2 (347 aa).

The next 11 helical transmembrane spans lie at 1 to 21 (MNPL…LITA), 25 to 45 (HWFL…PVLT), 55 to 75 (AAIK…MAIL), 96 to 116 (TMML…FWVP), 123 to 143 (TLMS…SIMY), 145 to 165 (IFPV…IMVG), 178 to 198 (ILAY…PYNP), 200 to 220 (ITIF…LALN), 237 to 257 (LTWL…LPPL), 274 to 294 (GTLI…YFYM), and 324 to 344 (FLLP…PLTF).

This sequence belongs to the complex I subunit 2 family. Core subunit of respiratory chain NADH dehydrogenase (Complex I) which is composed of 45 different subunits. Interacts with TMEM242.

The protein localises to the mitochondrion inner membrane. The enzyme catalyses a ubiquinone + NADH + 5 H(+)(in) = a ubiquinol + NAD(+) + 4 H(+)(out). Its function is as follows. Core subunit of the mitochondrial membrane respiratory chain NADH dehydrogenase (Complex I) which catalyzes electron transfer from NADH through the respiratory chain, using ubiquinone as an electron acceptor. Essential for the catalytic activity and assembly of complex I. The protein is NADH-ubiquinone oxidoreductase chain 2 of Hylobates lar (Lar gibbon).